A 733-amino-acid chain; its full sequence is Nuclear hormone receptor family member nhr-66 (733 aa).

2 stretches are compositionally biased toward low complexity: residues 113–130 and 165–185; these read PAIPSSSSCSEPSTSQAS and QQNRQQHQQQQRQQQQAQQQN. Residues 113-190 form a disordered region; that stretch reads PAIPSSSSCS…AQQQNSMARK (78 aa). A DNA-binding region (nuclear receptor) is located at residues 266-343; sequence VPACAICGTD…SGMDKNSVQH (78 aa). NR C4-type zinc fingers lie at residues 269-289 and 305-326; these read CAICGTDSTGIHFGVDACAAC and CNKGGKCTVVKDGSAGQKCRAC. The interval 361–396 is disordered; the sequence is PDAEFEPSAKVSTVSEPSTSSGPSGGFNQNVSSPAG. The segment covering 371-382 has biased composition (low complexity); sequence VSTVSEPSTSSG. The region spanning 444–687 is the NR LBD domain; the sequence is CLGDWFRKPS…ACFNQMLDVE (244 aa). The interval 676-687 is AF-2; the sequence is ADACFNQMLDVE. Residues 691 to 733 are disordered; that stretch reads VSPDGQKDSEAEQGPSPVSVPEAARGSYQDDDMPPVLEKNCDL.

This sequence belongs to the nuclear hormone receptor family. Interacts with nuclear hormone receptor nhr-49; the interaction is direct. In terms of tissue distribution, widely expressed, including in hypodermis, gut, muscle, and neuronal cells of the ventral nerve cord, head, and tail ganglia. Expressed in the head ganglion in several sensory and interneurons, including AVA.

Its subcellular location is the nucleus. In terms of biological role, transcription factor. Binds to regulatory elements and regulates transcription of target genes, including the potassium channel accessory subunit mps-2. Negatively regulates transcription of mps-2, thereby modulating age-dependent memory decline. In concert with nuclear hormone receptor nhr-49, involved in regulating target genes with roles in sphingolipid breakdown and lipid remodeling. Plays a role in modulating mitochondrial morphology and function. This is Nuclear hormone receptor family member nhr-66 from Caenorhabditis elegans.